We begin with the raw amino-acid sequence, 476 residues long: Protein transport protein Sec61 subunit alpha isoform B (476 aa).

At glycine 2 to leucine 33 the chain is on the cytoplasmic side. The chain crosses the membrane as a helical span at residues tryptophan 34–isoleucine 53. Residues methionine 54–leucine 76 lie on the Lumenal side of the membrane. The chain crosses the membrane as a helical span at residues methionine 77–glycine 96. Topologically, residues alanine 97–lysine 117 are cytoplasmic. The helical transmembrane segment at leucine 118–glycine 138 threads the bilayer. Over aspartate 139–glycine 144 the chain is Lumenal. Residues alanine 145–leucine 165 form a helical membrane-spanning segment. At aspartate 166–glycine 172 the chain is on the cytoplasmic side. A helical membrane pass occupies residues tyrosine 173–tryptophan 193. Over lysine 194–proline 240 the chain is Lumenal. Residues asparagine 241–phenylalanine 261 form a helical membrane-spanning segment. Topologically, residues arginine 262–asparagine 288 are cytoplasmic. Residues isoleucine 289 to serine 309 form a helical membrane-spanning segment. Over threonine 310–valine 354 the chain is Lumenal. Residues leucine 355–phenylalanine 375 traverse the membrane as a helical segment. Residues serine 376–alanine 420 lie on the Cytoplasmic side of the membrane. Residues alanine 421–isoleucine 441 traverse the membrane as a helical segment. Over glycine 442–threonine 445 the chain is Lumenal. A helical membrane pass occupies residues glycine 446–valine 462. Topologically, residues lysine 463–phenylalanine 476 are cytoplasmic.

It belongs to the SecY/SEC61-alpha family. The SEC61 channel-forming translocon complex consists of channel-forming core components SEC61A1, SEC61B and SEC61G and different auxiliary components such as SEC62 and SEC63.

Its subcellular location is the endoplasmic reticulum membrane. Component of SEC61 channel-forming translocon complex that mediates transport of signal peptide-containing precursor polypeptides across the endoplasmic reticulum (ER). Forms a ribosome receptor and a gated pore in the ER membrane, both functions required for cotranslational translocation of nascent polypeptides. The polypeptide is Protein transport protein Sec61 subunit alpha isoform B (sec61ab) (Oncorhynchus mykiss (Rainbow trout)).